A 332-amino-acid chain; its full sequence is Ribosomal RNA small subunit methyltransferase H (332 aa).

S-adenosyl-L-methionine is bound by residues 36-38 (GGY), aspartate 54, phenylalanine 81, aspartate 102, and glutamine 109. A disordered region spans residues 295-322 (PRARSAKLRGAERTESPAHAAGDLPGWP).

This sequence belongs to the methyltransferase superfamily. RsmH family.

The protein localises to the cytoplasm. The enzyme catalyses cytidine(1402) in 16S rRNA + S-adenosyl-L-methionine = N(4)-methylcytidine(1402) in 16S rRNA + S-adenosyl-L-homocysteine + H(+). Functionally, specifically methylates the N4 position of cytidine in position 1402 (C1402) of 16S rRNA. In Rhodopseudomonas palustris (strain ATCC BAA-98 / CGA009), this protein is Ribosomal RNA small subunit methyltransferase H.